The following is a 389-amino-acid chain: Alanine racemase 1 (389 aa).

Lys-41 functions as the Proton acceptor; specific for D-alanine in the catalytic mechanism. Lys-41 carries the post-translational modification N6-(pyridoxal phosphate)lysine. Residue Arg-137 coordinates substrate. The Proton acceptor; specific for L-alanine role is filled by Tyr-266. Met-313 is a binding site for substrate.

Belongs to the alanine racemase family. The cofactor is pyridoxal 5'-phosphate.

The catalysed reaction is L-alanine = D-alanine. The protein operates within amino-acid biosynthesis; D-alanine biosynthesis; D-alanine from L-alanine: step 1/1. Functionally, catalyzes the interconversion of L-alanine and D-alanine. May also act on other amino acids. This Bacillus subtilis (strain 168) protein is Alanine racemase 1 (alr1).